The following is an 86-amino-acid chain: U15-lycotoxin-Ls1a (86 aa).

A signal peptide spans 1–20; that stretch reads MNSKIFAVLFLLAFLSCVLS. A WAP domain is found at 21-66; that stretch reads DQYCPKSSITACKKMNIRNDCCKDDDCTGGSWCCATPCGNFCKYPT. Disulfide bonds link Cys24–Cys54, Cys32–Cys58, Cys41–Cys53, Cys42–Cys80, and Cys47–Cys62.

The protein belongs to the venom protein 11 family. 01 (wap-1) subfamily. Post-translationally, contains 5 disulfide bonds. Expressed by the venom gland.

The protein resides in the secreted. Its function is as follows. Has antibacterial activity. In Lycosa singoriensis (Wolf spider), this protein is U15-lycotoxin-Ls1a.